Reading from the N-terminus, the 452-residue chain is COBRA-like protein 1 (452 aa).

The signal sequence occupies residues 1–33 (MGFFLCSSSSIFFKFGISIIFLVSFSGLTPSEA). 9 N-linked (GlcNAc...) asparagine glycosylation sites follow: Asn42, Asn167, Asn175, Asn214, Asn239, Asn254, Asn323, Asn338, and Asn357. Residue Ser432 is the site of GPI-anchor amidated serine attachment. A propeptide spans 433–452 (VGSLFAAMALLLIVFLHGNL) (removed in mature form).

It belongs to the COBRA family. Expressed in roots, stems, leaves, flowers and siliques.

Its subcellular location is the cell membrane. The chain is COBRA-like protein 1 (COBL1) from Arabidopsis thaliana (Mouse-ear cress).